The sequence spans 164 residues: Outer membrane protein assembly factor BamE (164 aa).

The signal sequence occupies residues 1-19 (MHAFFPRLLLLLLFLPLTH). The disordered stretch occupies residues 111-164 (PAFSESEPAQNFFSPEQTFTPAPDTDSNMNEEPDKKGTVNFLKENQTNFYKDNQ). 2 stretches are compositionally biased toward polar residues: residues 117–140 (EPAQNFFSPEQTFTPAPDTDSNMN) and 153–164 (KENQTNFYKDNQ).

Belongs to the BamE family. As to quaternary structure, part of the Bam complex.

Its subcellular location is the cell outer membrane. In terms of biological role, part of the outer membrane protein assembly complex, which is involved in assembly and insertion of beta-barrel proteins into the outer membrane. The chain is Outer membrane protein assembly factor BamE from Nitrosomonas europaea (strain ATCC 19718 / CIP 103999 / KCTC 2705 / NBRC 14298).